A 347-amino-acid polypeptide reads, in one-letter code: 4-hydroxy-2-oxovalerate aldolase (347 aa).

The Pyruvate carboxyltransferase domain maps to 2–252 (ILISDATLRD…DTRTTFERVM (251 aa)). Residue 10–11 (RD) participates in substrate binding. Asp11 is a binding site for Mn(2+). The active-site Proton acceptor is the His14. The substrate site is built by Ser164 and His191. Positions 191 and 193 each coordinate Mn(2+).

Belongs to the 4-hydroxy-2-oxovalerate aldolase family.

It catalyses the reaction (S)-4-hydroxy-2-oxopentanoate = acetaldehyde + pyruvate. The protein is 4-hydroxy-2-oxovalerate aldolase (mhpE) of Burkholderia pseudomallei (strain K96243).